Here is a 564-residue protein sequence, read N- to C-terminus: NAD-dependent malic enzyme (564 aa).

Residue Tyr102 is the Proton donor of the active site. Residue Arg155 coordinates NAD(+). Lys173 acts as the Proton acceptor in catalysis. 3 residues coordinate a divalent metal cation: Glu244, Asp245, and Asp268. Asp268 and Asn417 together coordinate NAD(+).

This sequence belongs to the malic enzymes family. In terms of assembly, homotetramer. Mg(2+) is required as a cofactor. Mn(2+) serves as cofactor.

The enzyme catalyses (S)-malate + NAD(+) = pyruvate + CO2 + NADH. The catalysed reaction is oxaloacetate + H(+) = pyruvate + CO2. The chain is NAD-dependent malic enzyme from Pseudomonas aeruginosa (strain LESB58).